A 463-amino-acid polypeptide reads, in one-letter code: Probable glycosyltransferase 3 (463 aa).

The segment at 1-20 (MAVTGGGRPAARQQAARGKQ) is disordered. Residues 1-24 (MAVTGGGRPAARQQAARGKQMQRT) are Cytoplasmic-facing. Over residues 9–20 (PAARQQAARGKQ) the composition is skewed to low complexity. Residues 25–47 (FNNVKITLICGFITLLVLRGTVG) traverse the membrane as a helical; Signal-anchor for type II membrane protein segment. The Lumenal portion of the chain corresponds to 48-463 (INLLTYGVGG…ALKMDAKIES (416 aa)). A disordered region spans residues 82–125 (EIRSDTDDDDDDEEEEPLGVDASTTTTTNSTTTTATAARRRSSN). The segment covering 87 to 99 (TDDDDDDEEEEPL) has biased composition (acidic residues). Low complexity predominate over residues 103-118 (ASTTTTTNSTTTTATA). N-linked (GlcNAc...) asparagine glycans are attached at residues asparagine 110, asparagine 125, and asparagine 442.

It belongs to the glycosyltransferase 34 family.

The protein resides in the golgi apparatus membrane. Its function is as follows. Probable glycosyltransferase that may be involved in the biosynthesis of xyloglucan. The protein is Probable glycosyltransferase 3 of Oryza sativa subsp. indica (Rice).